Consider the following 78-residue polypeptide: Acyl carrier protein (78 aa).

Residues 2 to 77 enclose the Carrier domain; it reads STIEERVKKI…AAIDYVKAHQ (76 aa). Serine 37 carries the O-(pantetheine 4'-phosphoryl)serine modification.

It belongs to the acyl carrier protein (ACP) family. 4'-phosphopantetheine is transferred from CoA to a specific serine of apo-ACP by AcpS. This modification is essential for activity because fatty acids are bound in thioester linkage to the sulfhydryl of the prosthetic group.

Its subcellular location is the cytoplasm. The protein operates within lipid metabolism; fatty acid biosynthesis. In terms of biological role, carrier of the growing fatty acid chain in fatty acid biosynthesis. The chain is Acyl carrier protein from Pseudomonas putida (strain ATCC 47054 / DSM 6125 / CFBP 8728 / NCIMB 11950 / KT2440).